Here is a 186-residue protein sequence, read N- to C-terminus: Der GTPase-activating protein YihI (186 aa).

A disordered region spans residues Lys-42–Asp-77. Basic and acidic residues predominate over residues Ser-62 to Asp-77.

The protein belongs to the YihI family. In terms of assembly, interacts with Der.

Functionally, a GTPase-activating protein (GAP) that modifies Der/EngA GTPase function. May play a role in ribosome biogenesis. In Haemophilus influenzae (strain ATCC 51907 / DSM 11121 / KW20 / Rd), this protein is Der GTPase-activating protein YihI.